The sequence spans 128 residues: MARKKTTKRKVKKNVPLGIAHIHTTFNNTIVTITDLNGNAVTWSSAGALGFKGSRKSTPFAAQLAAEAVAKAAMEHGMVKVETFITGPGPGREAAIRSLQAAGLEITAIKDVTAVPHNGCRPPKPPRG.

This sequence belongs to the universal ribosomal protein uS11 family. In terms of assembly, part of the 30S ribosomal subunit. Interacts with proteins S7 and S18. Binds to IF-3.

Functionally, located on the platform of the 30S subunit, it bridges several disparate RNA helices of the 16S rRNA. Forms part of the Shine-Dalgarno cleft in the 70S ribosome. The sequence is that of Small ribosomal subunit protein uS11 from Onion yellows phytoplasma (strain OY-M).